We begin with the raw amino-acid sequence, 618 residues long: Dihydroxy-acid dehydratase 1 (618 aa).

Mg(2+) is bound at residue Asp-81. Cys-122 is a [2Fe-2S] cluster binding site. Residues Asp-123 and Lys-124 each contribute to the Mg(2+) site. At Lys-124 the chain carries N6-carboxylysine. Cys-195 serves as a coordination point for [2Fe-2S] cluster. Glu-491 lines the Mg(2+) pocket. The Proton acceptor role is filled by Ser-517.

The protein belongs to the IlvD/Edd family. In terms of assembly, homodimer. Requires [2Fe-2S] cluster as cofactor. The cofactor is Mg(2+).

It carries out the reaction (2R)-2,3-dihydroxy-3-methylbutanoate = 3-methyl-2-oxobutanoate + H2O. The catalysed reaction is (2R,3R)-2,3-dihydroxy-3-methylpentanoate = (S)-3-methyl-2-oxopentanoate + H2O. It functions in the pathway amino-acid biosynthesis; L-isoleucine biosynthesis; L-isoleucine from 2-oxobutanoate: step 3/4. It participates in amino-acid biosynthesis; L-valine biosynthesis; L-valine from pyruvate: step 3/4. Its function is as follows. Functions in the biosynthesis of branched-chain amino acids. Catalyzes the dehydration of (2R,3R)-2,3-dihydroxy-3-methylpentanoate (2,3-dihydroxy-3-methylvalerate) into 2-oxo-3-methylpentanoate (2-oxo-3-methylvalerate) and of (2R)-2,3-dihydroxy-3-methylbutanoate (2,3-dihydroxyisovalerate) into 2-oxo-3-methylbutanoate (2-oxoisovalerate), the penultimate precursor to L-isoleucine and L-valine, respectively. The chain is Dihydroxy-acid dehydratase 1 from Pseudoalteromonas translucida (strain TAC 125).